A 286-amino-acid chain; its full sequence is ATP synthase gamma chain (286 aa).

It belongs to the ATPase gamma chain family. As to quaternary structure, F-type ATPases have 2 components, CF(1) - the catalytic core - and CF(0) - the membrane proton channel. CF(1) has five subunits: alpha(3), beta(3), gamma(1), delta(1), epsilon(1). CF(0) has three main subunits: a, b and c.

The protein resides in the cell inner membrane. Functionally, produces ATP from ADP in the presence of a proton gradient across the membrane. The gamma chain is believed to be important in regulating ATPase activity and the flow of protons through the CF(0) complex. This Fuscovulum blasticum (Rhodobacter blasticus) protein is ATP synthase gamma chain.